Consider the following 280-residue polypeptide: Mediator of RNA polymerase II transcription subunit 2 (280 aa).

Positions 212–247 are disordered; the sequence is GLQNTSGGNEKKNDPQINFNDTNAPPSAVNVPENGN. Residues 226 to 236 are compositionally biased toward polar residues; sequence PQINFNDTNAP.

Belongs to the Mediator complex subunit 2 family. As to quaternary structure, component of the Mediator complex.

The protein localises to the nucleus. In terms of biological role, component of the Mediator complex, a coactivator involved in the regulated transcription of nearly all RNA polymerase II-dependent genes. Mediator functions as a bridge to convey information from gene-specific regulatory proteins to the basal RNA polymerase II transcription machinery. Mediator is recruited to promoters by direct interactions with regulatory proteins and serves as a scaffold for the assembly of a functional preinitiation complex with RNA polymerase II and the general transcription factors. The chain is Mediator of RNA polymerase II transcription subunit 2 (MED2) from Kluyveromyces lactis (strain ATCC 8585 / CBS 2359 / DSM 70799 / NBRC 1267 / NRRL Y-1140 / WM37) (Yeast).